A 379-amino-acid polypeptide reads, in one-letter code: Adenylosuccinate synthetase (379 aa).

Residues 11–17 and 39–41 contribute to the GTP site; these read GDEGKGK and GHT. Catalysis depends on D12, which acts as the Proton acceptor. D12 and G39 together coordinate Mg(2+). IMP-binding positions include 12-15, 37-40, T127, R141, Q223, T238, and R302; these read DEGK and NAGH. The Proton donor role is filled by H40. 298-304 provides a ligand contact to substrate; the sequence is TTTGRGR. Residues R304 and 330-332 contribute to the GTP site; that span reads KLD.

Belongs to the adenylosuccinate synthetase family. In terms of assembly, homodimer. Mg(2+) serves as cofactor.

Its subcellular location is the cytoplasm. The catalysed reaction is IMP + L-aspartate + GTP = N(6)-(1,2-dicarboxyethyl)-AMP + GDP + phosphate + 2 H(+). Its pathway is purine metabolism; AMP biosynthesis via de novo pathway; AMP from IMP: step 1/2. Plays an important role in the de novo pathway of purine nucleotide biosynthesis. Catalyzes the first committed step in the biosynthesis of AMP from IMP. The polypeptide is Adenylosuccinate synthetase (Methanosarcina mazei (strain ATCC BAA-159 / DSM 3647 / Goe1 / Go1 / JCM 11833 / OCM 88) (Methanosarcina frisia)).